The chain runs to 184 residues: MGNDIEFNVFQKCWTISNDFGLNTDLLETNLINLGIVISLLIYFGKGVLSNLLRNRKLAISNTIRDAEERYKEATQKLEQAKIRLEQAEMKARNIRTSGLSQMEKEKKDLIDGTNGDLRRLEDSKNATIRSEKQRAIEQVQQQVSRSALERTLETLKNCLDNELHLRMIDHNIGLLRAMESVTD.

Residues 31 to 53 (LINLGIVISLLIYFGKGVLSNLL) form a helical membrane-spanning segment.

This sequence belongs to the ATPase B chain family. In terms of assembly, F-type ATPases have 2 components, F(1) - the catalytic core - and F(0) - the membrane proton channel. F(1) has five subunits: alpha(3), beta(3), gamma(1), delta(1), epsilon(1). F(0) has four main subunits: a(1), b(1), b'(1) and c(10-14). The alpha and beta chains form an alternating ring which encloses part of the gamma chain. F(1) is attached to F(0) by a central stalk formed by the gamma and epsilon chains, while a peripheral stalk is formed by the delta, b and b' chains.

Its subcellular location is the plastid. The protein localises to the chloroplast thylakoid membrane. Functionally, f(1)F(0) ATP synthase produces ATP from ADP in the presence of a proton or sodium gradient. F-type ATPases consist of two structural domains, F(1) containing the extramembraneous catalytic core and F(0) containing the membrane proton channel, linked together by a central stalk and a peripheral stalk. During catalysis, ATP synthesis in the catalytic domain of F(1) is coupled via a rotary mechanism of the central stalk subunits to proton translocation. In terms of biological role, component of the F(0) channel, it forms part of the peripheral stalk, linking F(1) to F(0). The chain is ATP synthase subunit b, chloroplastic from Aneura mirabilis (Parasitic liverwort).